The following is a 203-amino-acid chain: FMN-dependent NADH:quinone oxidoreductase (203 aa).

FMN is bound by residues Ser9, 15 to 17 (SVS), and 138 to 141 (SRGG).

The protein belongs to the azoreductase type 1 family. Homodimer. The cofactor is FMN.

The catalysed reaction is 2 a quinone + NADH + H(+) = 2 a 1,4-benzosemiquinone + NAD(+). It catalyses the reaction N,N-dimethyl-1,4-phenylenediamine + anthranilate + 2 NAD(+) = 2-(4-dimethylaminophenyl)diazenylbenzoate + 2 NADH + 2 H(+). Quinone reductase that provides resistance to thiol-specific stress caused by electrophilic quinones. Its function is as follows. Also exhibits azoreductase activity. Catalyzes the reductive cleavage of the azo bond in aromatic azo compounds to the corresponding amines. The chain is FMN-dependent NADH:quinone oxidoreductase from Methylorubrum populi (strain ATCC BAA-705 / NCIMB 13946 / BJ001) (Methylobacterium populi).